The sequence spans 650 residues: 1-deoxy-D-xylulose-5-phosphate synthase (650 aa).

Thiamine diphosphate-binding positions include His-73 and 114–116; that span reads SHA. A Mg(2+)-binding site is contributed by Asp-145. Thiamine diphosphate-binding positions include 146–147, Asn-174, Tyr-285, and Glu-367; that span reads GA. Asn-174 is a binding site for Mg(2+). Residues 631–650 are disordered; it reads MGDEVGADESNQTPAGGGQA.

The protein belongs to the transketolase family. DXPS subfamily. Homodimer. Mg(2+) serves as cofactor. The cofactor is thiamine diphosphate.

The enzyme catalyses D-glyceraldehyde 3-phosphate + pyruvate + H(+) = 1-deoxy-D-xylulose 5-phosphate + CO2. The protein operates within metabolic intermediate biosynthesis; 1-deoxy-D-xylulose 5-phosphate biosynthesis; 1-deoxy-D-xylulose 5-phosphate from D-glyceraldehyde 3-phosphate and pyruvate: step 1/1. Its function is as follows. Catalyzes the acyloin condensation reaction between C atoms 2 and 3 of pyruvate and glyceraldehyde 3-phosphate to yield 1-deoxy-D-xylulose-5-phosphate (DXP). The protein is 1-deoxy-D-xylulose-5-phosphate synthase of Parafrankia sp. (strain EAN1pec).